The following is a 137-amino-acid chain: Small ribosomal subunit protein uS12 (137 aa).

Residues 1 to 57 are disordered; it reads MPTINQLVRKPRKSKVEKSKSPALNVGYNSHKKVQTNVSSPQKRGVATRVGTMTPKK. 3-methylthioaspartic acid is present on D102.

Belongs to the universal ribosomal protein uS12 family. In terms of assembly, part of the 30S ribosomal subunit. Contacts proteins S8 and S17. May interact with IF1 in the 30S initiation complex.

With S4 and S5 plays an important role in translational accuracy. In terms of biological role, interacts with and stabilizes bases of the 16S rRNA that are involved in tRNA selection in the A site and with the mRNA backbone. Located at the interface of the 30S and 50S subunits, it traverses the body of the 30S subunit contacting proteins on the other side and probably holding the rRNA structure together. The combined cluster of proteins S8, S12 and S17 appears to hold together the shoulder and platform of the 30S subunit. The sequence is that of Small ribosomal subunit protein uS12 from Streptococcus sanguinis (strain SK36).